We begin with the raw amino-acid sequence, 105 residues long: MICOS complex subunit Mic10 (105 aa).

The chain crosses the membrane as a helical span at residues 29–46 (LLKVTGGVAIGIVASVAF). The Mitochondrial intermembrane portion of the chain corresponds to 47–105 (FKSRSWPIWFGSGVGLGTGWSNCRHDFASPYVLHGKRVPAGQDSQGKPAYNIITEQHKQ). The tract at residues 85-105 (PAGQDSQGKPAYNIITEQHKQ) is disordered.

The protein belongs to the MICOS complex subunit Mic10 family. As to quaternary structure, component of the mitochondrial contact site and cristae organizing system (MICOS) complex.

The protein localises to the mitochondrion inner membrane. Its function is as follows. Component of the MICOS complex, a large protein complex of the mitochondrial inner membrane that plays crucial roles in the maintenance of crista junctions, inner membrane architecture, and formation of contact sites to the outer membrane. The polypeptide is MICOS complex subunit Mic10 (Caenorhabditis elegans).